Consider the following 191-residue polypeptide: Phospholipase A2-delta (191 aa).

A signal peptide spans 1-25; sequence MIRGGALTHVALGLTVFLLLAVVHS. Intrachain disulfides connect Cys-29–Cys-56, Cys-33–Cys-62, Cys-38–Cys-115, Cys-49–Cys-69, Cys-68–Cys-93, and Cys-75–Cys-86. Ca(2+)-binding residues include Tyr-48, Gly-50, and Tyr-53. Residue His-72 is part of the active site. Residue Asp-73 participates in Ca(2+) binding. A disordered region spans residues 161 to 191; sequence KADTKDGLGTNQGPQTKDGSKVSVPMNPSPS.

It belongs to the phospholipase A2 family. Ca(2+) serves as cofactor. As to expression, specifically expressed in flowers but at a low level. Detected specifically in the pollen.

Its subcellular location is the secreted. The protein localises to the endoplasmic reticulum. The enzyme catalyses a 1,2-diacyl-sn-glycero-3-phosphocholine + H2O = a 1-acyl-sn-glycero-3-phosphocholine + a fatty acid + H(+). Functionally, PA2 catalyzes the calcium-dependent hydrolysis of the 2-acyl groups in 3-sn-phosphoglycerides. Releases lysophospholipids (LPLs) and free fatty acids (FFAs) from membrane phospholipids in response to hormones and other external stimuli. Plays a role in pollen development and germination and tube growth. In Arabidopsis thaliana (Mouse-ear cress), this protein is Phospholipase A2-delta (PLA2-DELTA).